Here is a 247-residue protein sequence, read N- to C-terminus: E3 ubiquitin-protein ligase RNF182 (247 aa).

The segment at 20 to 68 adopts an RING-type zinc-finger fold; the sequence is CKICYNRYNLKQRKPKVLECCHRVCAKCLYKIIDFGDSPQGVIVCPFCR. Transmembrane regions (helical) follow at residues 184–204 and 211–231; these read VLVW…IYLL and LGVV…VYGF.

Interacts with ATP6V0C.

It is found in the membrane. The protein localises to the cytoplasm. The catalysed reaction is S-ubiquitinyl-[E2 ubiquitin-conjugating enzyme]-L-cysteine + [acceptor protein]-L-lysine = [E2 ubiquitin-conjugating enzyme]-L-cysteine + N(6)-ubiquitinyl-[acceptor protein]-L-lysine.. It functions in the pathway protein modification; protein ubiquitination. E3 ubiquitin-protein ligase that mediates the ubiquitination of ATP6V0C and targets it to degradation via the ubiquitin-proteasome pathway. Also plays a role in the inhibition of TLR-triggered innate immune response by mediating 'Lys'-48-linked ubiquitination and subsequent degradation of NF-kappa-B component RELA. The chain is E3 ubiquitin-protein ligase RNF182 (Rnf182) from Rattus norvegicus (Rat).